A 369-amino-acid polypeptide reads, in one-letter code: Dihydroorotate dehydrogenase (quinone) (369 aa).

FMN is bound by residues 66 to 70 and Thr-90; that span reads AGFDK. Residue Lys-70 participates in substrate binding. 115–119 provides a ligand contact to substrate; it reads NRMGF. FMN-binding residues include Asn-143 and Asn-176. Residue Asn-176 coordinates substrate. Ser-179 (nucleophile) is an active-site residue. Residue Asn-181 participates in substrate binding. 2 residues coordinate FMN: Lys-217 and Thr-245. Substrate is bound at residue 246 to 247; it reads NT. FMN is bound by residues Gly-271, Gly-300, and 321-322; that span reads YT.

It belongs to the dihydroorotate dehydrogenase family. Type 2 subfamily. In terms of assembly, monomer. FMN is required as a cofactor.

Its subcellular location is the cell membrane. The enzyme catalyses (S)-dihydroorotate + a quinone = orotate + a quinol. It participates in pyrimidine metabolism; UMP biosynthesis via de novo pathway; orotate from (S)-dihydroorotate (quinone route): step 1/1. In terms of biological role, catalyzes the conversion of dihydroorotate to orotate with quinone as electron acceptor. The polypeptide is Dihydroorotate dehydrogenase (quinone) (Nocardia farcinica (strain IFM 10152)).